The sequence spans 150 residues: 6,7-dimethyl-8-ribityllumazine synthase (150 aa).

Residues Phe-11, 43–45, and 67–69 contribute to the 5-amino-6-(D-ribitylamino)uracil site; these read VYD and AVI. 72 to 73 contributes to the (2S)-2-hydroxy-3-oxobutyl phosphate binding site; that stretch reads AT. His-75 serves as the catalytic Proton donor. Leu-100 contributes to the 5-amino-6-(D-ribitylamino)uracil binding site. Residue Arg-115 coordinates (2S)-2-hydroxy-3-oxobutyl phosphate.

Belongs to the DMRL synthase family.

It catalyses the reaction (2S)-2-hydroxy-3-oxobutyl phosphate + 5-amino-6-(D-ribitylamino)uracil = 6,7-dimethyl-8-(1-D-ribityl)lumazine + phosphate + 2 H2O + H(+). The protein operates within cofactor biosynthesis; riboflavin biosynthesis; riboflavin from 2-hydroxy-3-oxobutyl phosphate and 5-amino-6-(D-ribitylamino)uracil: step 1/2. Catalyzes the formation of 6,7-dimethyl-8-ribityllumazine by condensation of 5-amino-6-(D-ribitylamino)uracil with 3,4-dihydroxy-2-butanone 4-phosphate. This is the penultimate step in the biosynthesis of riboflavin. This is 6,7-dimethyl-8-ribityllumazine synthase from Pyrobaculum aerophilum (strain ATCC 51768 / DSM 7523 / JCM 9630 / CIP 104966 / NBRC 100827 / IM2).